The sequence spans 79 residues: Small ribosomal subunit protein bS18 (79 aa).

The protein belongs to the bacterial ribosomal protein bS18 family. Part of the 30S ribosomal subunit. Forms a tight heterodimer with protein bS6.

Its function is as follows. Binds as a heterodimer with protein bS6 to the central domain of the 16S rRNA, where it helps stabilize the platform of the 30S subunit. The polypeptide is Small ribosomal subunit protein bS18 (Streptococcus suis (strain 98HAH33)).